A 219-amino-acid chain; its full sequence is Large ribosomal subunit protein eL13 (219 aa).

Positions lysine 198–threonine 219 are disordered.

It belongs to the eukaryotic ribosomal protein eL13 family. In terms of assembly, component of the 60S large ribosomal subunit (LSU).

It is found in the cytoplasm. Functionally, component of the ribosome, a large ribonucleoprotein complex responsible for the synthesis of proteins in the cell. The small ribosomal subunit (SSU) binds messenger RNAs (mRNAs) and translates the encoded message by selecting cognate aminoacyl-transfer RNA (tRNA) molecules. The large subunit (LSU) contains the ribosomal catalytic site termed the peptidyl transferase center (PTC), which catalyzes the formation of peptide bonds, thereby polymerizing the amino acids delivered by tRNAs into a polypeptide chain. The nascent polypeptides leave the ribosome through a tunnel in the LSU and interact with protein factors that function in enzymatic processing, targeting, and the membrane insertion of nascent chains at the exit of the ribosomal tunnel. As part of the LSU, it is probably required for its formation and the maturation of rRNAs. The chain is Large ribosomal subunit protein eL13 (RpL13) from Spodoptera frugiperda (Fall armyworm).